Here is a 214-residue protein sequence, read N- to C-terminus: Adenylate kinase (214 aa).

10-15 (GAGKGT) contacts ATP. The segment at 30–59 (STGDMFREAVASKSELGKKVEEILKRGDLV) is NMP. Residues Thr31, Arg36, 57-59 (DLV), 85-88 (GFPR), and Gln92 contribute to the AMP site. Positions 126-163 (NRRICSNCGKIYNLITLPPKVDGKCDVCGGTLYQREDD) are LID. An ATP-binding site is contributed by Arg127. Zn(2+) contacts are provided by Cys130 and Cys133. 136–137 (IY) lines the ATP pocket. Positions 150 and 153 each coordinate Zn(2+). 2 residues coordinate AMP: Arg160 and Arg171. Position 199 (Leu199) interacts with ATP.

This sequence belongs to the adenylate kinase family. As to quaternary structure, monomer.

The protein localises to the cytoplasm. It carries out the reaction AMP + ATP = 2 ADP. Its pathway is purine metabolism; AMP biosynthesis via salvage pathway; AMP from ADP: step 1/1. Catalyzes the reversible transfer of the terminal phosphate group between ATP and AMP. Plays an important role in cellular energy homeostasis and in adenine nucleotide metabolism. The chain is Adenylate kinase from Thermosipho africanus (strain TCF52B).